Here is a 253-residue protein sequence, read N- to C-terminus: Aminoglycoside nucleotidyltransferase (4') (253 aa).

As to quaternary structure, homodimer.

It carries out the reaction kanamycin A + ATP = 4'-adenylylkanamycin A + diphosphate. The enzyme catalyses amikacin + ATP = 4'-adenylylamikacin + diphosphate. It catalyses the reaction neomycin B + ATP = 4'-adenylylneomycin B + diphosphate. The catalysed reaction is paromomycin + ATP = 4'-adenylylparomomycin + diphosphate. It carries out the reaction ribostamycin + ATP = 4'-adenylylribostamycin + diphosphate. The enzyme catalyses tobramycin + ATP = 4'-adenylyltobramycin + diphosphate. It catalyses the reaction kanamycin A + CTP = 4'-cytidylylkanamycin A + diphosphate. The catalysed reaction is kanamycin A + GTP = 4'-guanylylkanamycin A + diphosphate. It carries out the reaction kanamycin A + ITP = 4'-inosinylylkanamycin A + diphosphate. The enzyme catalyses dTTP + kanamycin A = 4'-thymidylylkanamycin A + diphosphate. It catalyses the reaction kanamycin A + UTP = 4'-uridylylkanamycin A + diphosphate. The catalysed reaction is kanamycin A + dATP = 4'-(2'-deoxyadenylyl)kanamycin A + diphosphate. It carries out the reaction kanamycin A + dCTP = 4'-(2'-deoxycytidylyl)kanamycin A + diphosphate. The enzyme catalyses kanamycin A + dGTP = 4'-(2'-deoxyguanylyl)kanamycin A + diphosphate. It catalyses the reaction dUTP + kanamycin A = 4'-(2'-deoxyuridylyl)kanamycin A + diphosphate. The catalysed reaction is amikacin + GTP = 4'-guanylylamikacin + diphosphate. It carries out the reaction amikacin + ITP = 4'-inosinylylamikacin + diphosphate. The enzyme catalyses amikacin + CTP = 4'-cytidylylamikacin + diphosphate. It catalyses the reaction amikacin + UTP = 4'-uridylylamikacin + diphosphate. The catalysed reaction is amikacin + dTTP = 4'-thymidylylamikacin + diphosphate. Its function is as follows. Inactivates aminoglycoside antibiotics such as kanamycin by catalyzing the transfer of a nucleotidyl group from nucleoside triphosphates such as (d)ATP to the 4'-hydroxyl group of the aminoglycoside. The polypeptide is Aminoglycoside nucleotidyltransferase (4') (Bacillus sp).